The sequence spans 277 residues: Shikimate dehydrogenase (NADP(+)) (277 aa).

Residues Ser-15–Ser-17 and Thr-62 each bind shikimate. Lys-66 (proton acceptor) is an active-site residue. 2 residues coordinate shikimate: Asn-87 and Asp-102. NADP(+)-binding positions include Gly-127–Ala-131, Asn-151–Lys-156, and Ile-219. Tyr-221 contributes to the shikimate binding site. Gly-242 contributes to the NADP(+) binding site.

Belongs to the shikimate dehydrogenase family. Homodimer.

It catalyses the reaction shikimate + NADP(+) = 3-dehydroshikimate + NADPH + H(+). Its pathway is metabolic intermediate biosynthesis; chorismate biosynthesis; chorismate from D-erythrose 4-phosphate and phosphoenolpyruvate: step 4/7. Involved in the biosynthesis of the chorismate, which leads to the biosynthesis of aromatic amino acids. Catalyzes the reversible NADPH linked reduction of 3-dehydroshikimate (DHSA) to yield shikimate (SA). The protein is Shikimate dehydrogenase (NADP(+)) of Bacillus anthracis (strain CDC 684 / NRRL 3495).